A 120-amino-acid chain; its full sequence is NAD(P)H-quinone oxidoreductase subunit 3, chloroplastic (120 aa).

3 helical membrane passes run 9-29, 64-84, and 88-108; these read IFWA…LISG, MFAL…PWAM, and VLGL…IVGS.

This sequence belongs to the complex I subunit 3 family. As to quaternary structure, NDH is composed of at least 16 different subunits, 5 of which are encoded in the nucleus.

Its subcellular location is the plastid. The protein localises to the chloroplast thylakoid membrane. The catalysed reaction is a plastoquinone + NADH + (n+1) H(+)(in) = a plastoquinol + NAD(+) + n H(+)(out). It catalyses the reaction a plastoquinone + NADPH + (n+1) H(+)(in) = a plastoquinol + NADP(+) + n H(+)(out). NDH shuttles electrons from NAD(P)H:plastoquinone, via FMN and iron-sulfur (Fe-S) centers, to quinones in the photosynthetic chain and possibly in a chloroplast respiratory chain. The immediate electron acceptor for the enzyme in this species is believed to be plastoquinone. Couples the redox reaction to proton translocation, and thus conserves the redox energy in a proton gradient. The sequence is that of NAD(P)H-quinone oxidoreductase subunit 3, chloroplastic from Manihot esculenta (Cassava).